The sequence spans 202 residues: Phosphatidyl-N-methylethanolamine N-methyltransferase (202 aa).

Topologically, residues 1–12 (MTTLSDYVDFSQ) are lumenal. An intramembrane region (helical) is located at residues 13–33 (DSFKYAALSIAFNPIFWNVVA). Residues 34 to 45 (RAEYRSHFLTRI) lie on the Lumenal side of the membrane. A helical transmembrane segment spans residues 46–66 (FGSPYRGCYFLAITIFSLGIL). Topologically, residues 67 to 90 (RDHIYQQALEDQPYYAPVHQPVLG) are cytoplasmic. The chain crosses the membrane as a helical span at residues 91-111 (GALFAVGSVLVLSSMYALGVT). 95 to 97 (AVG) lines the S-adenosyl-L-methionine pocket. Topologically, residues 112 to 154 (GTYLGDYFGILMDAPVTGFPFNVTGSPMYWGSTLNFLGVALYK) are lumenal. A helical membrane pass occupies residues 155-175 (GKVAGILLTALVFVLYWFALK). Topologically, residues 176-202 (WEDPFTAEIYAKRERERAKSKRGGKNQ) are cytoplasmic. 177–178 (ED) contributes to the S-adenosyl-L-methionine binding site.

This sequence belongs to the class VI-like SAM-binding methyltransferase superfamily. PEMT/PEM2 methyltransferase family.

The protein localises to the endoplasmic reticulum membrane. Its subcellular location is the mitochondrion membrane. The catalysed reaction is a 1,2-diacyl-sn-glycero-3-phospho-N-methylethanolamine + S-adenosyl-L-methionine = a 1,2-diacyl-sn-glycero-3-phospho-N,N-dimethylethanolamine + S-adenosyl-L-homocysteine + H(+). It catalyses the reaction a 1,2-diacyl-sn-glycero-3-phospho-N,N-dimethylethanolamine + S-adenosyl-L-methionine = a 1,2-diacyl-sn-glycero-3-phosphocholine + S-adenosyl-L-homocysteine + H(+). It participates in phospholipid metabolism; phosphatidylcholine biosynthesis. Catalyzes the second two steps of the methylation pathway of phosphatidylcholine biosynthesis, the SAM-dependent methylation of phosphatidylmonomethylethanolamine (PMME) to phosphatidyldimethylethanolamine (PDME) and of PDME to phosphatidylcholine (PC). This chain is Phosphatidyl-N-methylethanolamine N-methyltransferase, found in Emericella nidulans (strain FGSC A4 / ATCC 38163 / CBS 112.46 / NRRL 194 / M139) (Aspergillus nidulans).